We begin with the raw amino-acid sequence, 184 residues long: Probable RNA 2'-phosphotransferase (184 aa).

The protein belongs to the KptA/TPT1 family.

Its function is as follows. Removes the 2'-phosphate from RNA via an intermediate in which the phosphate is ADP-ribosylated by NAD followed by a presumed transesterification to release the RNA and generate ADP-ribose 1''-2''-cyclic phosphate (APPR&gt;P). May function as an ADP-ribosylase. This Escherichia coli O8 (strain IAI1) protein is Probable RNA 2'-phosphotransferase.